Reading from the N-terminus, the 169-residue chain is Disulfide bond formation protein B (169 aa).

The Cytoplasmic portion of the chain corresponds to 1–14 (MNNLTLSLHRERRL). A helical membrane pass occupies residues 15–31 (LVLLGLVCLALLAGALY). The Periplasmic portion of the chain corresponds to 32-49 (LQYVKNEDPCPLCIIQRY). A disulfide bond links Cys41 and Cys44. Residues 50-64 (FFVLIAVFAFIGAGM) form a helical membrane-spanning segment. Residues 65-71 (ASGAGIA) lie on the Cytoplasmic side of the membrane. The helical transmembrane segment at 72–89 (VIEALIVLSAAAGVGTAA) threads the bilayer. Residues 90-144 (RHLYVQLNPGFSCGFDALQPVVDSLPPAHWLPGVFKVAGLCETVYPPIFGILLPG) lie on the Periplasmic side of the membrane. Residues Cys102 and Cys130 are joined by a disulfide bond. Residues 145–163 (WALIAFALIVVPVAASLLR) traverse the membrane as a helical segment. The Cytoplasmic segment spans residues 164-169 (HRGRLR).

This sequence belongs to the DsbB family.

The protein localises to the cell inner membrane. Functionally, required for disulfide bond formation in some periplasmic proteins. Acts by oxidizing the DsbA protein. The sequence is that of Disulfide bond formation protein B from Burkholderia thailandensis (strain ATCC 700388 / DSM 13276 / CCUG 48851 / CIP 106301 / E264).